The chain runs to 4776 residues: Pneumococcal serine-rich repeat protein (4776 aa).

An N-terminal signal peptide occupies residues 1 to 72 (MTETVEDKVS…VVLGTISTSN (72 aa)). O-linked (GlcNAc...) serine glycosylation is found at Ser-73, Ser-75, Ser-76, Ser-78, Ser-80, Ser-82, Ser-94, Ser-100, Ser-108, Ser-110, Ser-118, Ser-120, and Ser-121. The serine-rich repeat region 1, SRR1 stretch occupies residues 73-121 (SASSTSLSASESASTSASESASTSASTSASTSASESASTSASTSISASS). A disordered region spans residues 86-112 (STSASESASTSASTSASTSASESASTS). The interval 122–166 (TVVGSQTAAATEATAKKVEEDRKKPASDYVASVTNVNLQSYAKRR) is self aggregating domain. The segment at 122–394 (TVVGSQTAAA…QSKSLSVSAS (273 aa)) is basic region, BR. Residues 164–168 (KRRKR) carry the Host furin cleavage recognition motif. Residues 273 to 341 (TQTMLTLGSD…GYGLTSSWTV (69 aa)) are keratin 10-binding domain, cell-type specific binding to lung-derived cells. The interval 395-4712 (QSASASASTS…ASTSASASAS (4318 aa)) is serine-rich repeat region 2, SRR2. Disordered regions lie at residues 481-627 (ASTS…STSA), 861-889 (ASASTSASESASTSASASASTSASESAST), 925-965 (ASAS…SASA), 1052-1085 (SASTSASESASTSASASASTSASESASTSASASA), 1123-1153 (ASASTSASESASTSTSASASTSASESASTSA), 1171-1199 (ASASTSASASASTSASASTSASESASTSA), 1311-1357 (ASES…SAST), 1671-1731 (ASES…SESA), 1792-1863 (SASE…STSA), 2105-2133 (ASASTSASESASTSASASASTSASESAST), 2169-2209 (ASAS…SASA), 2296-2329 (SASTSASESASTSASASASTSASESASTSASASA), 2367-2397 (ASASTSASESASTSTSASASTSASESASTSA), 2415-2443 (ASASTSASASASTSASASTSASESASTSA), 2571-2631 (ASES…SESA), 2737-2805 (ESAS…STSA), 2855-3113 (ASAS…STSA), 3347-3375 (ASASTSASESASTSASASASTSASESAST), 3411-3451 (ASAS…SASA), 3538-3571 (SASTSASESASTSASASASTSASESASTSASASA), 3609-3639 (ASASTSASESASTSTSASASTSASESASTSA), 3657-3685 (ASASTSASASASTSASASTSASESASTSA), 3797-3843 (ASES…SAST), 4167-4197 (ASASTSASESASTSTSASASTSASESASTSA), 4215-4243 (ASASTSASASASTSASASTSASESASTSA), 4355-4401 (ASES…SAST), and 4706-4747 (SASA…GTES). Residues 4715–4747 (VSNSANHSNSQVGNTSGSTGKSQKELPNTGTES) are compositionally biased toward polar residues. Residues 4740-4744 (LPNTG) carry the LPXTG sorting signal motif. Thr-4743 is modified (pentaglycyl murein peptidoglycan amidated threonine). The propeptide at 4744-4776 (GTESSIGSVLLGVLAAVTGIGLVAKRRKRDEEE) is removed by sortase.

The protein belongs to the serine-rich repeat protein (SRRP) family. As to quaternary structure, binds to human and mouse protein keratin 10 (KRT10). Post-translationally, glycosylated. Only truncated substrates greater than 25 residues long are glycosylated by the Gtf1-Gtf2 complex in vitro; only Ser residues have been seen to be glycosylated. Based on electrophoretic mobility it is probable that most of the Ser residues in SSR1 and SSR2 are O-GlcNAcylated. Subsequent glycosylation by up to 7 sugar transferases (Gtf3 and GlyAT, GlyB, GlyD, GlyE, GlyF and GlyG) is able to generate very high sugar polymorphism. Can be cleaved by human furin protease; this fragment contributes to self-aggregation and possibly biofilm formation in vitro.

It localises to the secreted. The protein resides in the cell wall. It is found in the cell surface. Functionally, protein that allows bacteria to adhere to mammalian host cells. Required for full virulence in mouse infection models when infected intranasally. Required for adhesion to host cells in vitro and for persistence in the lower respiratory tract. Binds host keratin 10 (KRT10) on lung cells which mediates adhesion via the C-terminus of the basic region (BR, residues 273-341); glycosylation of either protein is not required for the interaction. A region in the N-terminus (residues 122-166) self aggregates, contributing to mature biofilm formation. The basic region (BR, residues 187-385) also self aggregates; the BR binds DNA which enhances self aggregation. The protein is Pneumococcal serine-rich repeat protein of Streptococcus pneumoniae serotype 4 (strain ATCC BAA-334 / TIGR4).